The chain runs to 1342 residues: DNA-directed RNA polymerase subunit beta (1342 aa).

The protein belongs to the RNA polymerase beta chain family. In terms of assembly, the RNAP catalytic core consists of 2 alpha, 1 beta, 1 beta' and 1 omega subunit. When a sigma factor is associated with the core the holoenzyme is formed, which can initiate transcription.

It carries out the reaction RNA(n) + a ribonucleoside 5'-triphosphate = RNA(n+1) + diphosphate. DNA-dependent RNA polymerase catalyzes the transcription of DNA into RNA using the four ribonucleoside triphosphates as substrates. The sequence is that of DNA-directed RNA polymerase subunit beta from Wigglesworthia glossinidia brevipalpis.